Consider the following 1484-residue polypeptide: Cystic fibrosis transmembrane conductance regulator (1484 aa).

Topologically, residues 1-77 are cytoplasmic; the sequence is MQRSPLERAN…KLINALRRCF (77 aa). A helical transmembrane segment spans residues 78–98; sequence FWRFMFYGLLLYLGEVTKAVQ. One can recognise an ABC transmembrane type-1 1 domain in the interval 81-365; sequence FMFYGLLLYL…WAVQMWYDSI (285 aa). At 99 to 122 the chain is on the extracellular side; it reads PLLLGRIIASYDPDNAHERSIAYY. A helical membrane pass occupies residues 123–146; sequence LGIGLCLLFIVRTLLLHPAVFGLH. At 147-195 the chain is on the cytoplasmic side; it reads HIGMQMRIALFSLIYKKTLKLSSRVLDKISTGQLVSLLSNNLNKFDEGL. A helical transmembrane segment spans residues 196 to 216; that stretch reads ALAHFVWIAPLQVMLLMGLLW. Topologically, residues 217 to 222 are extracellular; that stretch reads DLLQAS. Residues 223–243 form a helical membrane-spanning segment; the sequence is AFCGLAVLVVLVLFQAWLGHR. Residues 244–298 are Cytoplasmic-facing; it reads MMKYRDRRAGKINERLVITAEIIENIQSVKAYCWEEAMENMIESLRETELKLTRK. A helical transmembrane segment spans residues 299-319; that stretch reads AAYMRYFNSSAFFFSGFFVVF. Over 320-339 the chain is Extracellular; it reads LSVLPSMLTKGIVLRKIFTT. The helical transmembrane segment at 340–358 threads the bilayer; that stretch reads ISFCIVLRMAVTRQFPWAV. Residues 359–859 are Cytoplasmic-facing; sequence QMWYDSIGAI…YLRYMTIHKK (501 aa). ATP is bound by residues Trp-401, Ser-434, 458-465, and Gln-493; that span reads GSTGAGKT. An ABC transporter 1 domain is found at 423–646; that stretch reads SDDKNLIFSN…RPDFSSKLMG (224 aa). A lipid anchor (S-palmitoyl cysteine) is attached at Cys-524. Phosphoserine occurs at positions 549 and 660. Residues 654–832 are disordered R region; that stretch reads SAERRNSILT…EEINEEDLKE (179 aa). The residue at position 670 (Ser-670) is a Phosphoserine; by PKA. A Phosphoserine modification is found at Ser-686. A Glycyl lysine isopeptide (Lys-Gly) (interchain with G-Cter in ubiquitin) cross-link involves residue Lys-688. 7 positions are modified to phosphoserine: Ser-700, Ser-712, Ser-737, Ser-768, Ser-791, Ser-796, and Ser-814. A helical transmembrane segment spans residues 860-880; that stretch reads LIFVLMMCLVIFLIEVAASLV. An ABC transmembrane type-1 2 domain is found at 860–1159; sequence LIFVLMMCLV…AVNASIDVDS (300 aa). The Extracellular portion of the chain corresponds to 881–922; sequence GLCLFKDGASRMNSTSNLNHTSTLDWFAVIVTNTSTYYMFYI. Asn-893, Asn-899, and Asn-913 each carry an N-linked (GlcNAc...) asparagine glycan. The chain crosses the membrane as a discontinuously helical span at residues 923–943; sequence YVGVADTLLALGFLRGLPLVH. Topologically, residues 944–994 are cytoplasmic; sequence SLISVSKILHQKMLHSVLQAPMSTFNTLKTGSILNRFSKDMAILDDLLPLT. The helical transmembrane segment at 995–1015 threads the bilayer; sequence IFDFIQLLLIVIGAVTVVSAL. Over 1016–1017 the chain is Extracellular; that stretch reads QP. The helical transmembrane segment at 1018-1038 threads the bilayer; it reads YIFLASVPVVIAFVLLRAYFL. The Cytoplasmic segment spans residues 1039 to 1099; the sequence is RTSQQLKQLE…TANWFLYLST (61 aa). Residues 1100 to 1120 traverse the membrane as a helical segment; it reads LRWFQMRIEMVFVIFFILVTF. The Extracellular portion of the chain corresponds to 1121-1134; sequence ISILTTGDGEGKVG. A helical membrane pass occupies residues 1135–1155; that stretch reads IVLTLAMNIMGTLQWAVNASI. The Cytoplasmic portion of the chain corresponds to 1156–1484; the sequence is DVDSLMRSVS…TEEEVQDTRL (329 aa). In terms of domain architecture, ABC transporter 2 spans 1212–1445; it reads MTVQDLTAKY…KSVFKQAISH (234 aa). Residues Tyr-1221 and 1246–1253 contribute to the ATP site; that span reads GRTGSGKS. Residues 1388 to 1484 form an interaction with GORASP2 region; that stretch reads KTLKQAFTNC…TEEEVQDTRL (97 aa). Cys-1397 is lipidated: S-palmitoyl cysteine. Ser-1446 and Ser-1460 each carry phosphoserine. Residues 1463–1484 are disordered; the sequence is LSRPKITALQEETEEEVQDTRL. Residues 1473 to 1484 show a composition bias toward acidic residues; that stretch reads EETEEEVQDTRL. The PDZ-binding signature appears at 1482–1484; that stretch reads TRL.

It belongs to the ABC transporter superfamily. ABCC family. CFTR transporter (TC 3.A.1.202) subfamily. In terms of assembly, monomer; does not require oligomerization for channel activity. May form oligomers in the membrane. Interacts with SLC26A3, SLC26A6 and NHERF1. Interacts with SHANK2. Interacts with MYO6. Interacts (via C-terminus) with GOPC (via PDZ domain); this promotes CFTR internalization and thereby decreases channel activity. Interacts with SLC4A7 through NHERF1. Found in a complex with MYO5B and RAB11A. Interacts with ANO1. Interacts with SLC26A8. Interacts with AHCYL1; the interaction increases CFTR activity. Interacts with CSE1L. The core-glycosylated form interacts with GORASP2 (via PDZ GRASP-type 1 domain) in respone to ER stress. Interacts with MARCHF2; the interaction leads to CFTR ubiqtuitination and degradation. Interacts with ADGRG2. N-glycosylated. In terms of processing, phosphorylated; cAMP treatment promotes phosphorylation and activates the channel. Dephosphorylation decreases the ATPase activity (in vitro). Phosphorylation at PKA sites activates the channel. Phosphorylation at PKC sites enhances the response to phosphorylation by PKA. Phosphorylated by AMPK; this inhibits channel activity. Post-translationally, ubiquitinated, leading to its degradation in the lysosome. Deubiquitination by USP10 in early endosomes enhances its endocytic recycling to the cell membrane. Ubiquitinated by RNF185 during ER stress. Ubiquitinated by MARCHF2.

It is found in the apical cell membrane. It localises to the early endosome membrane. The protein resides in the cell membrane. Its subcellular location is the recycling endosome membrane. The protein localises to the endoplasmic reticulum membrane. It is found in the nucleus. It catalyses the reaction ATP + H2O + closed Cl(-) channel = ADP + phosphate + open Cl(-) channel.. The catalysed reaction is chloride(in) = chloride(out). The enzyme catalyses hydrogencarbonate(in) = hydrogencarbonate(out). It carries out the reaction ATP + H2O = ADP + phosphate + H(+). Epithelial ion channel that plays an important role in the regulation of epithelial ion and water transport and fluid homeostasis. Mediates the transport of chloride ions across the cell membrane. Possesses an intrinsic ATPase activity and utilizes ATP to gate its channel; the passive flow of anions through the channel is gated by cycles of ATP binding and hydrolysis by the ATP-binding domains. The ion channel is also permeable to HCO(3)(-); selectivity depends on the extracellular chloride concentration. Exerts its function also by modulating the activity of other ion channels and transporters. Contributes to the regulation of the pH and the ion content of the epithelial fluid layer. Modulates the activity of the epithelial sodium channel (ENaC) complex, in part by regulating the cell surface expression of the ENaC complex. May regulate bicarbonate secretion and salvage in epithelial cells by regulating the transporter SLC4A7. Can inhibit the chloride channel activity of ANO1. Plays a role in the chloride and bicarbonate homeostasis during sperm epididymal maturation and capacitation. In Ornithorhynchus anatinus (Duckbill platypus), this protein is Cystic fibrosis transmembrane conductance regulator.